We begin with the raw amino-acid sequence, 116 residues long: UPF0102 protein LBJ_1427 (116 aa).

Belongs to the UPF0102 family.

This Leptospira borgpetersenii serovar Hardjo-bovis (strain JB197) protein is UPF0102 protein LBJ_1427.